We begin with the raw amino-acid sequence, 659 residues long: 1,4-alpha-glucan branching enzyme GlgB (659 aa).

Residues 1 to 12 (MRNCKELKHEKN) show a composition bias toward basic and acidic residues. Residues 1-25 (MRNCKELKHEKNGNVTEKIGKNKGK) are disordered. Aspartate 337 functions as the Nucleophile in the catalytic mechanism. Glutamate 390 serves as the catalytic Proton donor.

This sequence belongs to the glycosyl hydrolase 13 family. GlgB subfamily. In terms of assembly, monomer.

The enzyme catalyses Transfers a segment of a (1-&gt;4)-alpha-D-glucan chain to a primary hydroxy group in a similar glucan chain.. It participates in glycan biosynthesis; glycogen biosynthesis. In terms of biological role, catalyzes the formation of the alpha-1,6-glucosidic linkages in glycogen by scission of a 1,4-alpha-linked oligosaccharide from growing alpha-1,4-glucan chains and the subsequent attachment of the oligosaccharide to the alpha-1,6 position. This chain is 1,4-alpha-glucan branching enzyme GlgB, found in Clostridium perfringens (strain ATCC 13124 / DSM 756 / JCM 1290 / NCIMB 6125 / NCTC 8237 / Type A).